The sequence spans 267 residues: Phosphate import ATP-binding protein PstB 2 (267 aa).

An ABC transporter domain is found at 21–262 (LSTKDLHVYY…AKLQSTSDYV (242 aa)). Residue 53-60 (GPSGCGKS) coordinates ATP.

The protein belongs to the ABC transporter superfamily. Phosphate importer (TC 3.A.1.7) family. As to quaternary structure, the complex is composed of two ATP-binding proteins (PstB), two transmembrane proteins (PstC and PstA) and a solute-binding protein (PstS).

Its subcellular location is the cell membrane. The enzyme catalyses phosphate(out) + ATP + H2O = ADP + 2 phosphate(in) + H(+). Functionally, part of the ABC transporter complex PstSACB involved in phosphate import. Responsible for energy coupling to the transport system. The protein is Phosphate import ATP-binding protein PstB 2 of Streptococcus mutans serotype c (strain ATCC 700610 / UA159).